Consider the following 212-residue polypeptide: Small ribosomal subunit protein eS6 (212 aa).

Belongs to the eukaryotic ribosomal protein eS6 family.

In Metallosphaera sedula (strain ATCC 51363 / DSM 5348 / JCM 9185 / NBRC 15509 / TH2), this protein is Small ribosomal subunit protein eS6.